Reading from the N-terminus, the 187-residue chain is Interferon beta (187 aa).

The signal sequence occupies residues 1-21; it reads MTSRSLLPFVLSLLLPRIIMA. The residue at position 24 (Tyr-24) is a Phosphotyrosine. A disulfide bridge connects residues Cys-53 and Cys-162. 4 N-linked (GlcNAc...) asparagine glycosylation sites follow: Asn-76, Asn-95, Asn-132, and Asn-158.

This sequence belongs to the alpha/beta interferon family. Monomer.

Its subcellular location is the secreted. Type I interferon cytokine that plays a key role in the innate immune response to infection, developing tumors and other inflammatory stimuli. Signals via binding to high-affinity (IFNAR2) and low-affinity (IFNAR1) heterodimeric receptor, activating the canonical Jak-STAT signaling pathway resulting in transcriptional activation or repression of interferon-regulated genes that encode the effectors of the interferon response, such as antiviral proteins, regulators of cell proliferation and differentiation, and immunoregulatory proteins. Signals mostly via binding to a IFNAR1-IFNAR2 heterodimeric receptor, but can also function with IFNAR1 alone and independently of Jak-STAT pathways. Elicits a wide variety of responses, including antiviral and antibacterial activities, and can regulate the development of B-cells, myelopoiesis and lipopolysaccharide (LPS)-inducible production of tumor necrosis factor. Plays a role in neuronal homeostasis by regulating dopamine turnover and protecting dopaminergic neurons: acts by promoting neuronal autophagy and alpha-synuclein clearance, thereby preventing dopaminergic neuron loss. IFNB1 is more potent than interferon-alpha (IFN-alpha) in inducing the apoptotic and antiproliferative pathways required for control of tumor cell growth. The sequence is that of Interferon beta (IFNB1) from Tachyglossus aculeatus aculeatus (Southeast Australian short-beaked echidna).